The sequence spans 228 residues: MSVSEIFVELQGFLAAEQDIREEIRKVVQSLEQTAREILTLLQGVHQGAGFQDIPKRCLKAREHFGTVKTHLTSLKTKFPAEQYYRFHEHWRFVLQRLVFLAAFVVYLESETLVTREAVTEILGIEPDREKGFHLDVEDYLSGVLILASELSRLSVNSVTAGDYSRPLHISTFINELDSGFRLLNLKNDSLRKRYDGLKYDVKKVEEVVYDLSIRGFNKETAAACVEK.

A DNA/RNA binding region spans residues 86–90; it reads RFHEH. A leucine-zipper region spans residues 177 to 198; sequence LDSGFRLLNLKNDSLRKRYDGL. Residue K187 is modified to N6-acetyllysine. A Phosphoserine modification is found at S190. N6-acetyllysine is present on K199.

It belongs to the translin family. Ring-shaped heterooctamer of six TSN and two TSNAX subunits, DNA/RNA binding occurs inside the ring.

The protein localises to the cytoplasm. Its subcellular location is the nucleus. DNA-binding protein that specifically recognizes consensus sequences at the breakpoint junctions in chromosomal translocations, mostly involving immunoglobulin (Ig)/T-cell receptor gene segments. Seems to recognize single-stranded DNA ends generated by staggered breaks occurring at recombination hot spots. In terms of biological role, exhibits both single-stranded and double-stranded endoribonuclease activity. May act as an activator of RNA-induced silencing complex (RISC) by facilitating endonucleolytic cleavage of the siRNA passenger strand. The polypeptide is Translin (TSN) (Bos taurus (Bovine)).